The primary structure comprises 967 residues: Isoleucine--tRNA ligase (967 aa).

Residues 68–78 (PYANGTLHMGH) carry the 'HIGH' region motif. Residue E583 participates in L-isoleucyl-5'-AMP binding. Positions 624 to 628 (KMSKS) match the 'KMSKS' region motif. Residue K627 participates in ATP binding. Residues C937, C940, C957, and C960 each contribute to the Zn(2+) site.

Belongs to the class-I aminoacyl-tRNA synthetase family. IleS type 1 subfamily. In terms of assembly, monomer. Zn(2+) serves as cofactor.

It localises to the cytoplasm. The enzyme catalyses tRNA(Ile) + L-isoleucine + ATP = L-isoleucyl-tRNA(Ile) + AMP + diphosphate. Its function is as follows. Catalyzes the attachment of isoleucine to tRNA(Ile). As IleRS can inadvertently accommodate and process structurally similar amino acids such as valine, to avoid such errors it has two additional distinct tRNA(Ile)-dependent editing activities. One activity is designated as 'pretransfer' editing and involves the hydrolysis of activated Val-AMP. The other activity is designated 'posttransfer' editing and involves deacylation of mischarged Val-tRNA(Ile). This is Isoleucine--tRNA ligase from Prochlorococcus marinus (strain NATL1A).